The sequence spans 59 residues: UPF0434 protein Shew_1640 (59 aa).

This sequence belongs to the UPF0434 family.

This Shewanella loihica (strain ATCC BAA-1088 / PV-4) protein is UPF0434 protein Shew_1640.